We begin with the raw amino-acid sequence, 296 residues long: Protease HtpX homolog (296 aa).

The next 2 membrane-spanning stretches (helical) occupy residues 7–27 (TVLL…LVAG) and 29–49 (QGMI…YFFS). Residue His131 participates in Zn(2+) binding. Glu132 is an active-site residue. Residue His135 participates in Zn(2+) binding. 2 helical membrane passes run 141-161 (ILIS…ANMA) and 178-198 (IASI…ATLI). Glu207 serves as a coordination point for Zn(2+).

This sequence belongs to the peptidase M48B family. Zn(2+) serves as cofactor.

The protein localises to the cell inner membrane. The protein is Protease HtpX homolog of Sulfurihydrogenibium sp. (strain YO3AOP1).